Consider the following 741-residue polypeptide: Transketolase, chloroplastic (741 aa).

Residues 1-67 (MASSSSLTLS…TKQQFSVRAS (67 aa)) constitute a chloroplast transit peptide. Histidine 103 lines the substrate pocket. Thiamine diphosphate-binding positions include histidine 143 and 192–194 (GPL). Residue aspartate 233 coordinates Mg(2+). Positions 234 and 263 each coordinate thiamine diphosphate. Mg(2+) contacts are provided by asparagine 263 and isoleucine 265. Substrate is bound by residues histidine 340, arginine 434, and serine 461. Thiamine diphosphate is bound at residue histidine 340. Thiamine diphosphate is bound by residues glutamate 488 and phenylalanine 515. Glutamate 488 serves as the catalytic Proton donor. Histidine 539, aspartate 547, and arginine 598 together coordinate substrate.

The protein belongs to the transketolase family. As to quaternary structure, homodimer. Mg(2+) serves as cofactor. It depends on Ca(2+) as a cofactor. Requires Mn(2+) as cofactor. The cofactor is Co(2+). Thiamine diphosphate is required as a cofactor.

The protein localises to the plastid. It is found in the chloroplast thylakoid membrane. It carries out the reaction D-sedoheptulose 7-phosphate + D-glyceraldehyde 3-phosphate = aldehydo-D-ribose 5-phosphate + D-xylulose 5-phosphate. Its pathway is carbohydrate biosynthesis; Calvin cycle. Catalyzes the reversible transfer of a two-carbon ketol group from fructose-6-phosphate or sedoheptulose-7-phosphate to glyceraldehyde-3-phosphate to yield xylulose-5-phosphate and erythrose-4-phosphate or ribose-5-phosphate, respectively. The chain is Transketolase, chloroplastic from Solanum tuberosum (Potato).